A 328-amino-acid polypeptide reads, in one-letter code: uncharacterized protein (328 aa).

The protein belongs to the Gfo/Idh/MocA family.

This is an uncharacterized protein from Escherichia coli (strain K12).